The chain runs to 213 residues: Calcium-dependent cell adhesion molecule 1 (213 aa).

A run of 4 repeats spans residues 1–48, 49–97, 98–146, and 147–194. The segment at 1 to 194 is 4 X approximate tandem repeats; the sequence is MSVDANKVKF…IKKDETFPKN (194 aa).

Belongs to the Dictyostelium CAD family. The N-terminus is blocked.

It is found in the cell membrane. Its function is as follows. Mediates calcium-dependent cell-cell adhesion during the early stage of development. The sequence is that of Calcium-dependent cell adhesion molecule 1 (cadA) from Dictyostelium discoideum (Social amoeba).